Here is a 332-residue protein sequence, read N- to C-terminus: Small ribosomal subunit protein uS2 (332 aa).

This sequence belongs to the universal ribosomal protein uS2 family.

The chain is Small ribosomal subunit protein uS2 from Nitrobacter winogradskyi (strain ATCC 25391 / DSM 10237 / CIP 104748 / NCIMB 11846 / Nb-255).